Here is a 215-residue protein sequence, read N- to C-terminus: Leucyl/phenylalanyl-tRNA--protein transferase (215 aa).

The protein belongs to the L/F-transferase family.

Its subcellular location is the cytoplasm. It carries out the reaction N-terminal L-lysyl-[protein] + L-leucyl-tRNA(Leu) = N-terminal L-leucyl-L-lysyl-[protein] + tRNA(Leu) + H(+). The enzyme catalyses N-terminal L-arginyl-[protein] + L-leucyl-tRNA(Leu) = N-terminal L-leucyl-L-arginyl-[protein] + tRNA(Leu) + H(+). It catalyses the reaction L-phenylalanyl-tRNA(Phe) + an N-terminal L-alpha-aminoacyl-[protein] = an N-terminal L-phenylalanyl-L-alpha-aminoacyl-[protein] + tRNA(Phe). Functionally, functions in the N-end rule pathway of protein degradation where it conjugates Leu, Phe and, less efficiently, Met from aminoacyl-tRNAs to the N-termini of proteins containing an N-terminal arginine or lysine. The chain is Leucyl/phenylalanyl-tRNA--protein transferase from Campylobacter jejuni subsp. jejuni serotype O:6 (strain 81116 / NCTC 11828).